The chain runs to 528 residues: (R)-citramalate synthase (528 aa).

Residues 4–266 form the Pyruvate carboxyltransferase domain; it reads VKLYDTTLRD…RECIGDDQLR (263 aa).

Belongs to the alpha-IPM synthase/homocitrate synthase family.

The enzyme catalyses pyruvate + acetyl-CoA + H2O = (3R)-citramalate + CoA + H(+). The protein operates within amino-acid biosynthesis; L-isoleucine biosynthesis; 2-oxobutanoate from pyruvate: step 1/3. In terms of biological role, catalyzes the condensation of pyruvate and acetyl-coenzyme A to form (R)-citramalate. Makes part of the main pathway for isoleucine biosynthesis in G.sulfurreducens, i.e. the citramalate-dependent pathway. In Geobacter sulfurreducens (strain ATCC 51573 / DSM 12127 / PCA), this protein is (R)-citramalate synthase.